Consider the following 281-residue polypeptide: Ribulose-5-phosphate-3-epimerase, chloroplastic (281 aa).

A chloroplast-targeting transit peptide spans 1–45 (MSTSAASLCCSSTQVNGFGLRPERSLLYQPTSFSFSRRRTHGIVK). A substrate-binding site is contributed by S63. H88, D90, and H121 together coordinate a divalent metal cation. D90 acts as the Proton acceptor in catalysis. Substrate is bound by residues H121, 199-202 (GFGG), 232-234 (DGG), and 254-256 (GSA). D232 serves as a coordination point for a divalent metal cation. The active-site Proton donor is the D232.

The protein belongs to the ribulose-phosphate 3-epimerase family. In terms of assembly, homooctamer. The cofactor is Co(2+). Fe(2+) serves as cofactor. Mn(2+) is required as a cofactor. It depends on Zn(2+) as a cofactor. Present in roots, seeds and flowers. Accumulates in nematode feeding sites (NFS).

The protein resides in the plastid. The protein localises to the chloroplast thylakoid membrane. The catalysed reaction is D-ribulose 5-phosphate = D-xylulose 5-phosphate. It participates in carbohydrate biosynthesis; Calvin cycle. Functionally, essential protein required during embryogenesis. Catalyzes the reversible epimerization of D-ribulose 5-phosphate to D-xylulose 5-phosphate. Essential for the early steps of nematode feeding sites (NFS, multinucleated root cells) formation induced by the root-knot nematodes Heterodera schachtii, Meloidogyne incognita, M.javanica and M.hapla. In Arabidopsis thaliana (Mouse-ear cress), this protein is Ribulose-5-phosphate-3-epimerase, chloroplastic.